Reading from the N-terminus, the 782-residue chain is Isoamylase 3, chloroplastic (782 aa).

A chloroplast-targeting transit peptide spans 1-68 (MDSIGINRAP…EKVRRFDSVR (68 aa)). The segment covering 68–81 (RSTTARAQNGNAGR) has biased composition (polar residues). The interval 68–88 (RSTTARAQNGNAGRSMTEERG) is disordered. Catalysis depends on Asp445, which acts as the Nucleophile. Glu482 acts as the Proton donor in catalysis.

Belongs to the glycosyl hydrolase 13 family. As to expression, expressed in leaves. Expressed at low levels in developing endosperm.

It is found in the plastid. The protein localises to the chloroplast. It localises to the amyloplast. The enzyme catalyses Hydrolysis of (1-&gt;6)-alpha-D-glucosidic branch linkages in glycogen, amylopectin and their beta-limit dextrins.. Functionally, starch-debranching enzyme that plays a role in the degradation of transitory starch during the night in leaf blades, facilitates the formation of spherical amyloplasts containing compound granules in the endosperm, and affects morphological characteristics of plastids. In Oryza sativa subsp. japonica (Rice), this protein is Isoamylase 3, chloroplastic.